A 384-amino-acid polypeptide reads, in one-letter code: Glucose-fructose oxidoreductase domain-containing protein 2 (384 aa).

A signal peptide spans 1 to 25; that stretch reads MKTLPGIGVFGTGNTARVLISLLRA. The interval 358–384 is disordered; that stretch reads GEWESVELTNDETDSNQNLSEVIQHNL. The segment covering 372–384 has biased composition (polar residues); that stretch reads SNQNLSEVIQHNL.

Belongs to the Gfo/Idh/MocA family.

Its subcellular location is the secreted. It is found in the extracellular space. The protein resides in the extracellular matrix. In terms of biological role, promotes matrix assembly. The chain is Glucose-fructose oxidoreductase domain-containing protein 2 (gfod2) from Xenopus tropicalis (Western clawed frog).